Reading from the N-terminus, the 208-residue chain is Mediator of RNA polymerase II transcription subunit 18 (208 aa).

Ser-66 carries the phosphoserine modification.

It belongs to the Mediator complex subunit 18 family. As to quaternary structure, component of the Mediator complex, which is composed of MED1, MED4, MED6, MED7, MED8, MED9, MED10, MED11, MED12, MED13, MED13L, MED14, MED15, MED16, MED17, MED18, MED19, MED20, MED21, MED22, MED23, MED24, MED25, MED26, MED27, MED29, MED30, MED31, CCNC, CDK8 and CDC2L6/CDK11. The MED12, MED13, CCNC and CDK8 subunits form a distinct module termed the CDK8 module. Mediator containing the CDK8 module is less active than Mediator lacking this module in supporting transcriptional activation. Individual preparations of the Mediator complex lacking one or more distinct subunits have been variously termed ARC, CRSP, DRIP, PC2, SMCC and TRAP.

It is found in the nucleus. Component of the Mediator complex, a coactivator involved in the regulated transcription of nearly all RNA polymerase II-dependent genes. Mediator functions as a bridge to convey information from gene-specific regulatory proteins to the basal RNA polymerase II transcription machinery. Mediator is recruited to promoters by direct interactions with regulatory proteins and serves as a scaffold for the assembly of a functional preinitiation complex with RNA polymerase II and the general transcription factors. This chain is Mediator of RNA polymerase II transcription subunit 18 (MED18), found in Homo sapiens (Human).